The chain runs to 767 residues: DNA topoisomerase 1 (767 aa).

Positions 1–23 (MSGDHLHNDSQIEADFRLNDSHK) are enriched in basic and acidic residues. The disordered stretch occupies residues 1–201 (MSGDHLHNDS…NKKKKPKKEE (201 aa)). Residue S2 is modified to N-acetylserine. S2 and S10 each carry phosphoserine. Basic residues predominate over residues 24–39 (HKDKHKDREHRHKEHK). Residues 40–110 (KDKEKDREKS…DAKIKKEKEN (71 aa)) show a composition bias toward basic and acidic residues. S59 is modified (phosphoserine). A Glycyl lysine isopeptide (Lys-Gly) (interchain with G-Cter in SUMO2) cross-link involves residue K103. Residue K105 forms a Glycyl lysine isopeptide (Lys-Gly) (interchain with G-Cter in SUMO); alternate linkage. K105 is covalently cross-linked (Glycyl lysine isopeptide (Lys-Gly) (interchain with G-Cter in SUMO2); alternate). Position 114 is a phosphoserine (S114). K119 is covalently cross-linked (Glycyl lysine isopeptide (Lys-Gly) (interchain with G-Cter in SUMO); alternate). K119 participates in a covalent cross-link: Glycyl lysine isopeptide (Lys-Gly) (interchain with G-Cter in SUMO2); alternate. A Glycyl lysine isopeptide (Lys-Gly) (interchain with G-Cter in SUMO1); alternate cross-link involves residue K119. A compositionally biased stretch (basic and acidic residues) spans 131-168 (PKEDIKPLKRPRDEDDADYKPKKIKTEDIKKEKKRKLE). Glycyl lysine isopeptide (Lys-Gly) (interchain with G-Cter in SUMO2) cross-links involve residues K136 and K150. A Glycyl lysine isopeptide (Lys-Gly) (interchain with G-Cter in SUMO); alternate cross-link involves residue K155. K155 participates in a covalent cross-link: Glycyl lysine isopeptide (Lys-Gly) (interchain with G-Cter in SUMO2); alternate. Residues K160 and K166 each participate in a glycyl lysine isopeptide (Lys-Gly) (interchain with G-Cter in SUMO2) cross-link. Residue K174 forms a Glycyl lysine isopeptide (Lys-Gly) (interchain with G-Cter in SUMO2); alternate linkage. The residue at position 174 (K174) is an N6-acetyllysine; alternate. Residues 181–201 (KDKDKKGAESDNKKKKPKKEE) show a composition bias toward basic and acidic residues. K206 participates in a covalent cross-link: Glycyl lysine isopeptide (Lys-Gly) (interchain with G-Cter in SUMO2). K282 is subject to N6-acetyllysine. K338 participates in a covalent cross-link: Glycyl lysine isopeptide (Lys-Gly) (interchain with G-Cter in SUMO2). Interaction with DNA stretches follow at residues 427–428 (KY) and 490–495 (RAGNEK). In terms of domain architecture, Topo IB-type catalytic spans 434–767 (SSRIKGEKDW…IDMTDEDYEF (334 aa)). S508 carries the post-translational modification Phosphoserine; by CK2. K551 participates in a covalent cross-link: Glycyl lysine isopeptide (Lys-Gly) (interchain with G-Cter in SUMO2). Residues 587–589 (TAK) are interaction with DNA. Residues K644, K702, and K714 each participate in a glycyl lysine isopeptide (Lys-Gly) (interchain with G-Cter in SUMO2) cross-link. Y725 acts as the O-(3'-phospho-DNA)-tyrosine intermediate in catalysis.

It belongs to the type IB topoisomerase family. In terms of assembly, monomer. Interacts with ERCC6. Interacts with TPRN; TPRN interacts with a number of DNA damage response proteins, is recruited to sites of DNA damage and may play a role in DNA damage repair. Sumoylated. Lys-119 is the main site of sumoylation. Sumoylation plays a role in partitioning TOP1 between nucleoli and nucleoplasm. Levels are dramatically increased on camptothecin (CPT) treatment. In terms of processing, phosphorylation at Ser-508 by CK2 increases binding to supercoiled DNA and sensitivity to camptothecin.

The protein localises to the nucleus. The protein resides in the nucleolus. It is found in the nucleoplasm. The catalysed reaction is ATP-independent breakage of single-stranded DNA, followed by passage and rejoining.. Specifically inhibited by camptothecin (CPT), a plant alkaloid with antitumor activity. In terms of biological role, releases the supercoiling and torsional tension of DNA introduced during the DNA replication and transcription by transiently cleaving and rejoining one strand of the DNA duplex. Introduces a single-strand break via transesterification at a target site in duplex DNA. The scissile phosphodiester is attacked by the catalytic tyrosine of the enzyme, resulting in the formation of a DNA-(3'-phosphotyrosyl)-enzyme intermediate and the expulsion of a 5'-OH DNA strand. The free DNA strand then rotates around the intact phosphodiester bond on the opposing strand, thus removing DNA supercoils. Finally, in the religation step, the DNA 5'-OH attacks the covalent intermediate to expel the active-site tyrosine and restore the DNA phosphodiester backbone. Regulates the alternative splicing of tissue factor (F3) pre-mRNA in endothelial cells. Involved in the circadian transcription of the core circadian clock component BMAL1 by altering the chromatin structure around the ROR response elements (ROREs) on the BMAL1 promoter. The polypeptide is DNA topoisomerase 1 (TOP1) (Cricetulus griseus (Chinese hamster)).